The chain runs to 210 residues: Vacuolar protein sorting-associated protein 28 homolog 2 (210 aa).

Positions Met-1–Glu-99 constitute a VPS28 N-terminal domain. One can recognise a VPS28 C-terminal domain in the interval Ser-109–Leu-205.

Belongs to the VPS28 family. In terms of assembly, component of the endosomal sorting required for transport complex I (ESCRT-I), composed of ELC, VPS28 and VPS37. Interacts with ELC.

The protein resides in the endosome. Component of the ESCRT-I complex (endosomal sorting complex required for transport I), a regulator of vesicular trafficking process. Required for the sorting of endocytic ubiquitinated cargos into multivesicular bodies (MVBs). Mediates the association to the ESCRT-0 complex. The protein is Vacuolar protein sorting-associated protein 28 homolog 2 (VPS28-2) of Arabidopsis thaliana (Mouse-ear cress).